We begin with the raw amino-acid sequence, 527 residues long: Zinc finger imprinted 2 (527 aa).

Positions 1 to 16 are enriched in acidic residues; it reads MYQPEDDNNSDVTSDD. The interval 1–104 is disordered; that stretch reads MYQPEDDNNS…SRSQDAESYQ (104 aa). 3 stretches are compositionally biased toward basic and acidic residues: residues 17 to 26, 35 to 56, and 80 to 99; these read DMTRNRRESS, SGDR…DRWS, and FEMD…RSQD. Positions 176-246 constitute a KRAB domain; that stretch reads VTFEDVLVDF…ETDSRHTVIC (71 aa). A disordered region spans residues 247 to 322; sequence QGESHDDPLE…GICTSPQSAS (76 aa). A compositionally biased stretch (polar residues) spans 259 to 275; that stretch reads QGNQEKLLTPITMNDPK. The segment covering 297 to 307 has biased composition (basic and acidic residues); that stretch reads QSKDPLGKDPQ. C2H2-type zinc fingers lie at residues 328-350, 356-378, 412-434, 466-488, and 494-516; these read NRCE…ERIH, YECK…QKTH, FECF…LKAH, CQCC…YRTH, and YQCQ…YQLH.

It belongs to the krueppel C2H2-type zinc-finger protein family. In terms of tissue distribution, highest levels of expression in adult testis; modest levels in fetal kidney and brain.

The protein localises to the nucleus. In terms of biological role, may be involved in transcriptional regulation. This is Zinc finger imprinted 2 (ZIM2) from Homo sapiens (Human).